We begin with the raw amino-acid sequence, 302 residues long: Homoserine O-acetyltransferase (302 aa).

The active-site Acyl-thioester intermediate is the cysteine 142. Positions 163 and 192 each coordinate substrate. The active-site Proton acceptor is the histidine 235. Glutamate 237 is a catalytic residue. Position 249 (arginine 249) interacts with substrate.

It belongs to the MetA family.

The protein resides in the cytoplasm. The catalysed reaction is L-homoserine + acetyl-CoA = O-acetyl-L-homoserine + CoA. Its pathway is amino-acid biosynthesis; L-methionine biosynthesis via de novo pathway; O-acetyl-L-homoserine from L-homoserine: step 1/1. Its function is as follows. Transfers an acetyl group from acetyl-CoA to L-homoserine, forming acetyl-L-homoserine. The polypeptide is Homoserine O-acetyltransferase (Bacillus pumilus (strain SAFR-032)).